The primary structure comprises 1909 residues: MIEDKGPRVTDYFVVAGLTDTSTLLDQEINRLDTKSTGPKAPITDIAIIIKSAGETVPEGYTCVEATPSALQANLNYGSLKSPELFLCYKRGRDKPPLTDIGVLYEGKERLIPGCEVILATPYGRCANVNNSSTTSQRIFITYRRAPPVRPQNSLAVTDICVIVTSKGETPPHTFCKVDKNLNCGMWGSSVFLCYKKSVPASNAIAYKAGLIFRYPEEDYESFPLSESDVPLFCLPMGATIECWDPETKYPLPVFSTFVLTGSSAKKVYGAAIQFYEPYSRELLSEKQLMHLGLLTPVERKMVSKSINTNKCICLLSHWPFFEAFRKFLMFIYKLSVSGPHPLPIEKHISHFMQNIPFPSPQRPRILVQLSVHDALILSQPVSTPLPLSGANFSTLLMNLGPENCATLLLFVLLESKILLHSLRPAVLTGVAEAVVAMIFPFQWQCPYIPLCPLSLAAVLSAPLPFIVGVDSRYFDLHDPPQDVVCIDLDTNMLYVSDEKKNMNWKQLPKKPCKNLLSTLKKLYPQLSSVHQKTQEGSAIDMTPIEADFSWQKKMTQLEMEIQEAFLRFMASILKGYRTYLRPITEAPSNKATAADSLFDRQGFLKSRDRAYAKFYTLLSKTQIFIRFIEECSFVSDKDTGLAFFDDCIEKLFPDKGTEKTDKVDFDSAEDTRLIELDDSQKSEHTVFIMPPEPPPDDGKDLSPKYSYKYFPRLDLKLFDRPQELKLCFSRHPTGNSITKSPPLMAKRTKQEIKTAHKLAKRCYTNPPQWAKCLFSHCYSLWFICLPAYVRVSHPKVRALQQAYDVLIKMRKTDVDPLDEVCYRVVMQLCGLWGHPVLAVRVLFEMKTARIKPNAITYGYYNKVVLESPWPSSTRSGIFLWTKVRNVVRGLAQFRQPLKKTVQRSQVSSISGGQSDQGYGSKDELIKDDAEIHVPEEQAARELITKTKMQTEEVCDASAIVAKHSQPSPEPHSPTEPPAWGSSIVKVPSGIFDVNSRKSSTGSISNVLFSTQDPVEDAVFGEATNLKKNGDRGEKRQKHFPERSCSFSSESRAGMLLKKSSLDSNSSEMAIMMGADAKILTAALTCPKTSLLHIARTHSFENVSCHLPDSRTCMSESTWNPEHRSSPVPEMLEESQELLEPVVDDVPKTTATVDTYESLLSDSNSNQSRDLKTVSKDLRNKRSSLYGIAKVVQREDVETGLDPLSLLATECTGGKTPDSEDKLFSPVIARNLADEIESYMNLKSPLGSKSSSMELHREENRESGMTTAFIHALERRSSLPLDHGSPAQENPESEKSSPAVSRSKTFTGRFKQQTPSRTHKERSTSLSALVRSSPHGSLGSVVNSLSGLKLDNILSGPKIDVLKSGMKQAATVASKMWVAVASAYSYSDDEEETNRDYSFPAGLEDHILGENISPNTSISGLVPSELTQSNTSLGSSSSSGDVGKLHYPTGEVPFPRGMKGQDFEKSDHGSSQNTSMSSIYQNCAMEVLMSSCSQCRACGALVYDEEIMAGWTADDSNLNTACPFCKSNFLPLLNIEFKDLRGSASFFLKPSTSGDSLQSGSIPLANESLEHKPVSSLAEPDLINFMDFPKHNQIITEETGSAVEPSDEIKRASGDVQTMKISSVPNSLSKRNVSLTRSHSVGGPLQNIDFTQRPFHGISTVSLPNSLQEVVDPLGKRPNPPPVSVPYLSPLVLRKELESLLENEGDQVIHTSSFINQHPIIFWNLVWYFRRLDLPSNLPGLILTSEHCNEGVQLPLSSLSQDSKLVYIQLLWDNINLHQEPREPLYVSWRNFNSEKKSSLLSEEQQETSTLVETIRQSIQHNNVLKPINLLSQQMKPGMKRQRSLYREILFLSLVSLGRENIDIEAFDNEYGIAYNSLSSEILERLQKIDAPPSASVEWCRKCFGAPLI.

Residues 40-199 (KAPITDIAII…SVFLCYKKSV (160 aa)) enclose the MABP domain. The uDENN domain maps to 191 to 364 (VFLCYKKSVP…NIPFPSPQRP (174 aa)). A cDENN domain is found at 385 to 521 (PLPLSGANFS…PCKNLLSTLK (137 aa)). Positions 523 to 641 (LYPQLSSVHQ…CSFVSDKDTG (119 aa)) constitute a dDENN domain. A phosphoserine mark is found at Ser-703, Ser-737, and Ser-741. The PPR repeat unit spans residues 821–855 (VCYRVVMQLCGLWGHPVLAVRVLFEMKTARIKPNA). A phosphoserine mark is found at Glu-953, Ser-965, Ser-968, and Ser-973. Position 975 is a phosphothreonine (Thr-975). Ser-989, Ser-996, Ser-1003, Ser-1046, Ser-1061, Ser-1099, Ser-1126, Ser-1184, Ser-1225, Ser-1244, Ser-1252, and Ser-1278 each carry phosphoserine. Disordered stretches follow at residues 1243–1263 (KSPL…NRES) and 1277–1338 (SSLP…HGSL). Residues 1296 to 1316 (SSPAVSRSKTFTGRFKQQTPS) are compositionally biased toward polar residues. Phosphoserine occurs at positions 1325, 1337, and 1346. Residues 1419–1474 (SGLVPSELTQSNTSLGSSSSSGDVGKLHYPTGEVPFPRGMKGQDFEKSDHGSSQNT) form a disordered region. A compositionally biased stretch (low complexity) spans 1426–1440 (LTQSNTSLGSSSSSG). A compositionally biased stretch (basic and acidic residues) spans 1459–1468 (KGQDFEKSDH). Phosphoserine is present on residues Ser-1623, Ser-1627, Ser-1629, Ser-1640, and Ser-1799.

Post-translationally, phosphorylated in response to insulin.

The protein resides in the cytoplasmic vesicle membrane. It is found in the cell membrane. The protein localises to the cytoplasm. It localises to the cytosol. Its function is as follows. Guanine nucleotide exchange factor (GEF) activating RAB10. Promotes the exchange of GDP to GTP, converting inactive GDP-bound RAB10 into its active GTP-bound form. Thereby, stimulates SLC2A4/GLUT4 glucose transporter-enriched vesicles delivery to the plasma membrane in response to insulin. The sequence is that of DENN domain-containing protein 4C (DENND4C) from Homo sapiens (Human).